The sequence spans 757 residues: Protein lsd90 (757 aa).

Composition is skewed to polar residues over residues 1–11, 19–36, 51–69, and 94–118; these read MVGTINESMQN, TAQSAKQGIKNAGQSSSK, TAGNTANDGDSSYASSKNL, and DTSNVSPPSTQTGGYASKDTTSTYE. Disordered regions lie at residues 1–131, 224–244, 589–633, and 657–757; these read MVGT…SRSS, ERAREAQSSIERSASLREKQA, AQAE…KSKS, and AYVG…MSNK. The stretch at 166–604 forms a coiled coil; sequence DEKTLQDLLE…KVESEYNSVK (439 aa). Over residues 589-598 the composition is skewed to basic and acidic residues; sequence AQAEQSKVES. Over residues 619–632 the composition is skewed to polar residues; sequence VTTNEPTDVSTKSK. Residues 674 to 693 show a composition bias toward low complexity; sequence STPSTLPTSASTNAAATTTT. Residue 718–725 coordinates ATP; sequence GTTGLGKS.

May be involved in the metabolism of very long-chain fatty acid-containing phospholipids (VLCFA-PL). The polypeptide is Protein lsd90 (lsd90) (Schizosaccharomyces pombe (strain 972 / ATCC 24843) (Fission yeast)).